Consider the following 530-residue polypeptide: Cation channel sperm-associated protein 2 (530 aa).

Topologically, residues Met-1 to Pro-108 are cytoplasmic. A helical transmembrane segment spans residues Leu-109 to Leu-131. At Leu-132 to Trp-140 the chain is on the extracellular side. A helical membrane pass occupies residues Pro-141–Leu-166. Over Ser-167–Ser-175 the chain is Cytoplasmic. The helical transmembrane segment at Ala-176–Thr-200 threads the bilayer. Residues Gly-201 to Ser-203 are Extracellular-facing. A helical membrane pass occupies residues Val-204–Ala-222. The Cytoplasmic segment spans residues Gln-223–Lys-239. Residues Ser-240 to Val-262 traverse the membrane as a helical segment. Over Phe-263 to Ser-281 the chain is Extracellular. The segment at residues Asp-282–Phe-294 is an intramembrane region (helical; Pore-forming). Residues Thr-295 to Arg-314 lie on the Extracellular side of the membrane. Residues Ile-315–Val-341 form a helical membrane-spanning segment. The Cytoplasmic segment spans residues Thr-342–Lys-530. The disordered stretch occupies residues Met-378 to Glu-458. The segment covering Lys-429–Tyr-440 has biased composition (basic and acidic residues). Positions Ser-442–Glu-458 are enriched in low complexity.

Belongs to the cation channel sperm-associated (TC 1.A.1.19) family. Component of the CatSper complex or CatSpermasome composed of the core pore-forming members CATSPER1, CATSPER2, CATSPER3 and CATSPER4 as well as auxiliary members CATSPERB, CATSPERG, CATSPERD, CATSPERE, CATSPERZ, C2CD6/CATSPERT, TMEM249, TMEM262 and EFCAB9. HSPA1 may be an additional auxiliary complex member. The core complex members CATSPER1, CATSPER2, CATSPER3 and CATSPER4 form a heterotetrameric channel. The auxiliary CATSPERB, CATSPERG, CATSPERD and CATSPERE subunits form a pavilion-like structure over the pore which stabilizes the complex through interactions with CATSPER4, CATSPER3, CATSPER1 and CATSPER2 respectively. TMEM262/CATSPERH interacts with CATSPERB, further stabilizing the complex. C2CD6/CATSPERT interacts at least with CATSPERD and is required for targeting the CatSper complex in the flagellar membrane. Interacts with Ca(v)3.3/CACNA1I, leading to suppression of T-type calcium channel activity. Testis-specific.

It is found in the cell projection. The protein localises to the cilium. The protein resides in the flagellum membrane. The catalysed reaction is Ca(2+)(in) = Ca(2+)(out). The CatSper calcium channel is indirectly activated by extracellular progesterone and prostaglandins following the sequence: progesterone &gt; PGF1-alpha = PGE1 &gt; PGA1 &gt; PGE2 &gt;&gt; PGD2. The CatSper calcium channel is directly inhibited by endocannabinoid 2-arachidonoylglycerol (2AG). Indirect activation by progesterone takes place via the following mechanism: progesterone binds and activates the acylglycerol lipase ABHD2, which in turn mediates hydrolysis of 2AG inhibitor, relieving inhibition of the CatSper channel. The primary effect of progesterone activation is to shift voltage dependence towards more physiological, negative membrane potentials; it is not mediated by metabotropic receptors and second messengers. Sperm capacitation enhances the effect of progesterone by providing additional negative shift. Also activated by the elevation of intracellular pH. Pore-forming subunit of the CatSper complex, a sperm-specific voltage-gated calcium channel, that plays a central role in calcium-dependent physiological responses essential for successful fertilization, such as sperm hyperactivation, acrosome reaction and chemotaxis towards the oocyte. The protein is Cation channel sperm-associated protein 2 (CATSPER2) of Homo sapiens (Human).